Reading from the N-terminus, the 610-residue chain is Putative sensor histidine kinase NtrY-like (610 aa).

Helical transmembrane passes span Ile-18–Ile-38, Lys-49–Thr-69, Ile-92–Ala-112, and Ile-292–Val-312. Residues Ala-314–Arg-368 enclose the HAMP domain. The Histidine kinase domain occupies Lys-385 to Glu-596. A Phosphohistidine; by autocatalysis modification is found at His-388.

It is found in the cell membrane. The catalysed reaction is ATP + protein L-histidine = ADP + protein N-phospho-L-histidine.. Member of the two-component regulatory system RBE_0470/RBE_0312. This chain is Putative sensor histidine kinase NtrY-like, found in Rickettsia bellii (strain RML369-C).